Consider the following 443-residue polypeptide: MYGGDEVSAIVIDVGSYSCKAGYAGDDTPKAVFPSVVGSIEQTGETDEAKADKEAEAASDSKNGAKPMDVDKAKTKRKLYVGQELEFRRDHMEVISPMKDGTVTDWDIVDNIWNHAFRQRLLINPEEHPMLIAEPSTNTGQQREKAAELMFEKYKVPALFLAKNAVLTSFASGRATSLVVDSGGGSTVVAAVHDGYVLQKSVATSPIGGEFLTDCMMKSLESKGVVIRPRYSFKKKEVGPGEYKVVDLDLPNTTESYKLYCMRAIASDIKESVCRVPDTAFDEVAYANVPTTSYELPDGQTIEVGADRFKIPDILFNPSLSQTIPGVDGFADSMSVRGLPRMVIDSVNRCDVDIRKELLSSILLSGGSSSILQLKERLEKEVLEESSGNTRVKVLASGNSVERRFSVWIGGSILASLGSFQQMWFSKAEYEEHGVSYIQRKCP.

The segment at 36-69 (VVGSIEQTGETDEAKADKEAEAASDSKNGAKPMD) is disordered. Residues 47–56 (DEAKADKEAE) show a composition bias toward basic and acidic residues.

This sequence belongs to the actin family. ARP4 subfamily.

It is found in the nucleus. The protein resides in the cytoplasm. Involved in several developmental processes including organization of plant organs, flowering time, anther development, flower senescence and fertility, probably by regulating the chromatin structure. This Oryza sativa subsp. indica (Rice) protein is Actin-related protein 4 (ARP4).